The chain runs to 281 residues: Diaminopimelate epimerase (281 aa).

Substrate-binding residues include N13 and N66. C75 acts as the Proton donor in catalysis. Residues 76–77 (GN), N164, N197, and 215–216 (ER) each bind substrate. C224 functions as the Proton acceptor in the catalytic mechanism. 225-226 (GT) provides a ligand contact to substrate.

The protein belongs to the diaminopimelate epimerase family. In terms of assembly, homodimer.

The protein localises to the cytoplasm. It catalyses the reaction (2S,6S)-2,6-diaminopimelate = meso-2,6-diaminopimelate. The protein operates within amino-acid biosynthesis; L-lysine biosynthesis via DAP pathway; DL-2,6-diaminopimelate from LL-2,6-diaminopimelate: step 1/1. Catalyzes the stereoinversion of LL-2,6-diaminopimelate (L,L-DAP) to meso-diaminopimelate (meso-DAP), a precursor of L-lysine and an essential component of the bacterial peptidoglycan. This chain is Diaminopimelate epimerase, found in Picosynechococcus sp. (strain ATCC 27264 / PCC 7002 / PR-6) (Agmenellum quadruplicatum).